Here is a 396-residue protein sequence, read N- to C-terminus: Tyrosine--tRNA ligase (396 aa).

Positions Pro42–His51 match the 'HIGH' region motif. A 'KMSKS' region motif is present at residues Lys226–Ser230. Lys229 lines the ATP pocket. The region spanning Leu334–Ile395 is the S4 RNA-binding domain.

It belongs to the class-I aminoacyl-tRNA synthetase family. TyrS type 2 subfamily. Homodimer.

It is found in the cytoplasm. The enzyme catalyses tRNA(Tyr) + L-tyrosine + ATP = L-tyrosyl-tRNA(Tyr) + AMP + diphosphate + H(+). In terms of biological role, catalyzes the attachment of tyrosine to tRNA(Tyr) in a two-step reaction: tyrosine is first activated by ATP to form Tyr-AMP and then transferred to the acceptor end of tRNA(Tyr). This Francisella tularensis subsp. tularensis (strain SCHU S4 / Schu 4) protein is Tyrosine--tRNA ligase.